A 467-amino-acid chain; its full sequence is L-seryl-tRNA(Sec) selenium transferase (467 aa).

Lysine 298 carries the post-translational modification N6-(pyridoxal phosphate)lysine.

This sequence belongs to the SelA family. It depends on pyridoxal 5'-phosphate as a cofactor.

Its subcellular location is the cytoplasm. It carries out the reaction L-seryl-tRNA(Sec) + selenophosphate + H(+) = L-selenocysteinyl-tRNA(Sec) + phosphate. The protein operates within aminoacyl-tRNA biosynthesis; selenocysteinyl-tRNA(Sec) biosynthesis; selenocysteinyl-tRNA(Sec) from L-seryl-tRNA(Sec) (bacterial route): step 1/1. In terms of biological role, converts seryl-tRNA(Sec) to selenocysteinyl-tRNA(Sec) required for selenoprotein biosynthesis. This Alkaliphilus metalliredigens (strain QYMF) protein is L-seryl-tRNA(Sec) selenium transferase.